The sequence spans 201 residues: Large ribosomal subunit protein uL4 (201 aa).

Residues 46–71 (QKTRAEVIGSGKKPWRQKGTGRARAG) form a disordered region.

It belongs to the universal ribosomal protein uL4 family. In terms of assembly, part of the 50S ribosomal subunit.

One of the primary rRNA binding proteins, this protein initially binds near the 5'-end of the 23S rRNA. It is important during the early stages of 50S assembly. It makes multiple contacts with different domains of the 23S rRNA in the assembled 50S subunit and ribosome. In terms of biological role, forms part of the polypeptide exit tunnel. The sequence is that of Large ribosomal subunit protein uL4 from Shewanella sediminis (strain HAW-EB3).